A 348-amino-acid chain; its full sequence is MSTNHIQPLLDLLYQGKSLSREQAFEIFSALIRGEMSEATMAGMLVALKMRGETIDEISGAADAMRAAAKTFPYSNGDSLGNGIVDIVGTGGDGFNTINISTTAAFVAAAAGAKVAKHGNRSVSSKSGSSDLLAQFGIDLTMSPDTASRCLDALNLCFLFAPHYHGGVKHAGPVRQALKTRTLFNVLGPLINPARPEFMLLGVYSPELVLPIAKVLKALGTKRAMVVHGSGLDEVALHGNTQVAELKDGDIIEYQLTPADLGVPLAQISELEGGEPAQNALITEAILRGRGTDAHANAVAINAGCALYVCGIADSVKTGTLLALSTIQSGKAFELLSQLAKVSSETKE.

Residues Gly89, 92–93 (GD), Thr97, 99–102 (NIST), 117–125 (KHGNRSVSS), and Ser129 each bind 5-phospho-alpha-D-ribose 1-diphosphate. Gly89 contacts anthranilate. A Mg(2+)-binding site is contributed by Ser101. Asn120 contacts anthranilate. An anthranilate-binding site is contributed by Arg175. 2 residues coordinate Mg(2+): Asp233 and Glu234.

Belongs to the anthranilate phosphoribosyltransferase family. In terms of assembly, homodimer. The cofactor is Mg(2+).

It carries out the reaction N-(5-phospho-beta-D-ribosyl)anthranilate + diphosphate = 5-phospho-alpha-D-ribose 1-diphosphate + anthranilate. It participates in amino-acid biosynthesis; L-tryptophan biosynthesis; L-tryptophan from chorismate: step 2/5. Catalyzes the transfer of the phosphoribosyl group of 5-phosphorylribose-1-pyrophosphate (PRPP) to anthranilate to yield N-(5'-phosphoribosyl)-anthranilate (PRA). This chain is Anthranilate phosphoribosyltransferase, found in Shewanella putrefaciens (strain CN-32 / ATCC BAA-453).